The sequence spans 365 residues: L-lactate oxidase (365 aa).

An FMN hydroxy acid dehydrogenase domain is found at 2-365 (TAISSPINLF…QDIDTSFLHL (364 aa)). Position 28 (Tyr-28) interacts with pyruvate. FMN contacts are provided by residues 81-83 (PMA), Ser-110, and Gln-135. Tyr-137 serves as a coordination point for pyruvate. Thr-163 serves as a coordination point for FMN. Arg-172 lines the pyruvate pocket. FMN contacts are provided by Lys-239 and Ser-261. His-263 and Arg-266 together coordinate pyruvate. His-263 acts as the Proton acceptor in catalysis. FMN contacts are provided by residues 294 to 298 (DGGIR) and Arg-318.

It belongs to the FMN-dependent alpha-hydroxy acid dehydrogenase family. Homotetramer. The cofactor is FMN.

It carries out the reaction (S)-lactate + O2 = pyruvate + H2O2. The catalysed reaction is glyoxylate + O2 + H2O = oxalate + H2O2 + H(+). Its function is as follows. Catalyzes the oxidation of (S)-lactate (L-lactate) to pyruvate, with a reduction of O2 to H2O2. In extant N2-fixing cyanobacteria such as Nostoc, this enzyme primarily serves as an O2-scavenging enzyme, protecting nitrogenase that is extremely sensitive to O2, and is therefore an essential partner in N2 fixation. Also shows clear oxidase activity with glyoxylate in vitro, and low activity with glycerate, hydroxypyruvate and glycolate. The very low glycolate oxidase activity indicates that this enzyme is unlikely to be involved in photorespiratory glycolate metabolism, a pathway that seems to exist in this cyanobacterium, but in which the oxidation of glycolate is taken over by glycolate dehydrogenase (GlcD). Is not able to use D-lactate as substrate and does not show any dehydrogenase activity with NAD(+) or NADP(+). The chain is L-lactate oxidase from Nostoc sp. (strain PCC 7120 / SAG 25.82 / UTEX 2576).